The primary structure comprises 362 residues: Phosphoserine aminotransferase (362 aa).

Ser-9 and Arg-42 together coordinate L-glutamate. Pyridoxal 5'-phosphate-binding positions include 76–77, Trp-102, Thr-153, Asp-174, and Gln-197; that span reads GR. At Lys-198 the chain carries N6-(pyridoxal phosphate)lysine. Pyridoxal 5'-phosphate is bound at residue 239 to 240; it reads NT.

It belongs to the class-V pyridoxal-phosphate-dependent aminotransferase family. SerC subfamily. As to quaternary structure, homodimer. Pyridoxal 5'-phosphate serves as cofactor.

It localises to the cytoplasm. It catalyses the reaction O-phospho-L-serine + 2-oxoglutarate = 3-phosphooxypyruvate + L-glutamate. The catalysed reaction is 4-(phosphooxy)-L-threonine + 2-oxoglutarate = (R)-3-hydroxy-2-oxo-4-phosphooxybutanoate + L-glutamate. It functions in the pathway amino-acid biosynthesis; L-serine biosynthesis; L-serine from 3-phospho-D-glycerate: step 2/3. It participates in cofactor biosynthesis; pyridoxine 5'-phosphate biosynthesis; pyridoxine 5'-phosphate from D-erythrose 4-phosphate: step 3/5. In terms of biological role, catalyzes the reversible conversion of 3-phosphohydroxypyruvate to phosphoserine and of 3-hydroxy-2-oxo-4-phosphonooxybutanoate to phosphohydroxythreonine. The chain is Phosphoserine aminotransferase from Escherichia coli O127:H6 (strain E2348/69 / EPEC).